The sequence spans 126 residues: Fluoride-specific ion channel FluC (126 aa).

The next 4 membrane-spanning stretches (helical) occupy residues 9–29 (LAVFAGGAIGSVLRELLGFQL), 35–55 (LTATFGINIAACFLLGWLYAI), 63–83 (LLHLGAVGFCGGLSTFSSFVL), and 94–114 (WSIGLTAMTLEIAAGLAAAIL). Gly73 and Ser76 together coordinate Na(+).

This sequence belongs to the fluoride channel Fluc/FEX (TC 1.A.43) family.

Its subcellular location is the cell inner membrane. It carries out the reaction fluoride(in) = fluoride(out). Na(+) is not transported, but it plays an essential structural role and its presence is essential for fluoride channel function. In terms of biological role, fluoride-specific ion channel. Important for reducing fluoride concentration in the cell, thus reducing its toxicity. The chain is Fluoride-specific ion channel FluC from Ruegeria pomeroyi (strain ATCC 700808 / DSM 15171 / DSS-3) (Silicibacter pomeroyi).